The primary structure comprises 142 residues: uncharacterized protein (142 aa).

2 consecutive transmembrane segments (helical) span residues N12 to L29 and I44 to A66.

It localises to the cell membrane. This is an uncharacterized protein from Archaeoglobus fulgidus (strain ATCC 49558 / DSM 4304 / JCM 9628 / NBRC 100126 / VC-16).